The chain runs to 308 residues: MGRQGNLEELWCLRMPEIITPIITPFTKDNRIDKEKLKIHAENLIRKGIDKLFVNGTTGLGPSLSPEEKLENLKAVYDVTNKIIFQVGGLNLDDAIRLAKLSKDFDIVGIASYAPYYYPRMSEKHLVKYFKTLCEVSPHPVYLYNYPTATGKDIDAKVAKEIGCFTGVKDTIENIIHTLDYKRLNPNMLVYSGSDMLIATVASTGLDGNVAAGSNYLPEVTVTIKKLAMERKIDEALKLQFLHDEVIEASRIFGSLSSNYVLTKYFQGYDLGYPRPPIFPLDDEEERQLIKKVEGIRAKLVELKILKE.

Substrate is bound by residues 57–58, 144–146, and 169–171; these read TT, YNY, and KDT. The active-site Schiff-base intermediate with substrate is the K169.

The protein belongs to the DapA family. KDPG aldolase subfamily. Homotetramer; dimer of dimers.

It carries out the reaction 2-dehydro-3-deoxy-6-phospho-D-gluconate = D-glyceraldehyde 3-phosphate + pyruvate. The catalysed reaction is 2-dehydro-3-deoxy-6-phospho-D-galactonate = D-glyceraldehyde 3-phosphate + pyruvate. It participates in carbohydrate acid metabolism; 2-dehydro-3-deoxy-D-gluconate degradation; D-glyceraldehyde 3-phosphate and pyruvate from 2-dehydro-3-deoxy-D-gluconate: step 2/2. Involved in the degradation of glucose and galactose via the Entner-Doudoroff pathway. Catalyzes the reversible cleavage of 2-keto-3-deoxy-6-phosphogluconate (KDPG) and 2-keto-3-deoxygluconate (KDG) forming pyruvate and glyceraldehyde 3-phosphate or glyceraldehyde, respectively. It is also able to catalyze the reversible cleavage of 2-keto-3-deoxy-6-phosphogalactonate (KDPGal) and 2-keto-3-deoxygalactonate (KDGal). The protein is 2-dehydro-3-deoxy-phosphogluconate/2-dehydro-3-deoxy-6-phosphogalactonate aldolase (eda) of Saccharolobus solfataricus (strain ATCC 35092 / DSM 1617 / JCM 11322 / P2) (Sulfolobus solfataricus).